The primary structure comprises 209 residues: Uracil phosphoribosyltransferase (209 aa).

5-phospho-alpha-D-ribose 1-diphosphate contacts are provided by residues Arg-79, Arg-104, and Asp-131–Ser-139. Uracil contacts are provided by residues Ile-194 and Gly-199–Ala-201. Asp-200 contacts 5-phospho-alpha-D-ribose 1-diphosphate.

The protein belongs to the UPRTase family. Mg(2+) serves as cofactor.

It catalyses the reaction UMP + diphosphate = 5-phospho-alpha-D-ribose 1-diphosphate + uracil. It participates in pyrimidine metabolism; UMP biosynthesis via salvage pathway; UMP from uracil: step 1/1. Allosterically activated by GTP. In terms of biological role, catalyzes the conversion of uracil and 5-phospho-alpha-D-ribose 1-diphosphate (PRPP) to UMP and diphosphate. The polypeptide is Uracil phosphoribosyltransferase (Delftia acidovorans (strain DSM 14801 / SPH-1)).